The chain runs to 274 residues: Penicillin-insensitive murein endopeptidase (274 aa).

Positions 1–19 are cleaved as a signal peptide; it reads MNKTAIALLALLASSASLA. Cystine bridges form between C44-C265, C187-C235, and C216-C223. Residues H110, H113, D120, D147, H150, and H211 each coordinate Zn(2+). A disordered region spans residues 227 to 274; that stretch reads PLPPPGDGCGAELQSWFEPPKPGTTKPEKKTPPPLPPSCQALLDEHVI.

Belongs to the peptidase M74 family. As to quaternary structure, dimer. Zn(2+) serves as cofactor.

Its subcellular location is the periplasm. Its function is as follows. Murein endopeptidase that cleaves the D-alanyl-meso-2,6-diamino-pimelyl amide bond that connects peptidoglycan strands. Likely plays a role in the removal of murein from the sacculus. This Escherichia coli O17:K52:H18 (strain UMN026 / ExPEC) protein is Penicillin-insensitive murein endopeptidase.